The primary structure comprises 360 residues: Cinnamyl alcohol dehydrogenase 2 (360 aa).

The region spanning 23 to 351 (GVLSPFNFSR…KADVKYRFVI (329 aa)) is the Enoyl reductase (ER) domain. Position 50 (Cys-50) interacts with Zn(2+). Ser-52 lines the an alcohol pocket. Ser-52 contributes to the NADP(+) binding site. Residues Asp-53, His-72, Glu-73, Cys-103, Cys-106, Cys-109, Cys-117, and Cys-166 each contribute to the Zn(2+) site. His-72 lines the an alcohol pocket. 12 residues coordinate NADP(+): Leu-192, Gly-194, Leu-195, Ser-214, Thr-215, Ser-216, Lys-219, Lys-220, Val-277, Ala-279, Ser-301, and Arg-348.

Belongs to the zinc-containing alcohol dehydrogenase family. Class-P subfamily. In terms of assembly, homodimer. Zn(2+) serves as cofactor. Mainly expressed in young roots and, to a lower extent, in stems and leaves.

The protein resides in the cytoplasm. The enzyme catalyses (E)-cinnamyl alcohol + NADP(+) = (E)-cinnamaldehyde + NADPH + H(+). Its function is as follows. Alcohol dehydrogenase that catalyzes the conversion of (E)-cinnamyl alcohol to (E)-cinnamaldehyde. In Rauvolfia serpentina (Serpentine wood), this protein is Cinnamyl alcohol dehydrogenase 2.